Reading from the N-terminus, the 447-residue chain is UPF0210 protein Lreu_0940 (447 aa).

Belongs to the UPF0210 family. Homodimer.

This Limosilactobacillus reuteri (strain DSM 20016) (Lactobacillus reuteri) protein is UPF0210 protein Lreu_0940.